The following is a 363-amino-acid chain: NAD(P)H-quinone oxidoreductase subunit 1, chloroplastic (363 aa).

Transmembrane regions (helical) follow at residues 27–47, 98–118, 127–147, 248–268, 300–320, and 336–356; these read IWLL…VLVI, FSIG…VIPF, LSIG…GLLM, YSGI…LVSS, VFGT…FLFI, and LLNL…LLTT.

The protein belongs to the complex I subunit 1 family. NDH is composed of at least 16 different subunits, 5 of which are encoded in the nucleus.

Its subcellular location is the plastid. The protein resides in the chloroplast thylakoid membrane. It carries out the reaction a plastoquinone + NADH + (n+1) H(+)(in) = a plastoquinol + NAD(+) + n H(+)(out). The catalysed reaction is a plastoquinone + NADPH + (n+1) H(+)(in) = a plastoquinol + NADP(+) + n H(+)(out). In terms of biological role, NDH shuttles electrons from NAD(P)H:plastoquinone, via FMN and iron-sulfur (Fe-S) centers, to quinones in the photosynthetic chain and possibly in a chloroplast respiratory chain. The immediate electron acceptor for the enzyme in this species is believed to be plastoquinone. Couples the redox reaction to proton translocation, and thus conserves the redox energy in a proton gradient. This is NAD(P)H-quinone oxidoreductase subunit 1, chloroplastic from Platanus occidentalis (Sycamore).